The primary structure comprises 75 residues: U-stichotoxin-Hau3a (75 aa).

The first 19 residues, 1–19 (MNHLIILVVAAVFLGMASA), serve as a signal peptide directing secretion. Positions 20–26 (EDVFHKR) are excised as a propeptide. Intrachain disulfides connect cysteine 31–cysteine 71, cysteine 33–cysteine 61, and cysteine 54–cysteine 72.

Belongs to the sea anemone sodium channel inhibitory toxin family. Type I subfamily. In terms of processing, contains 3 disulfide bonds.

The protein localises to the secreted. It localises to the nematocyst. Functionally, toxin that is lethal to crab. This Heteractis aurora (Banded sea anemone) protein is U-stichotoxin-Hau3a.